The sequence spans 490 residues: ATP synthase subunit beta, chloroplastic (490 aa).

170–177 is a binding site for ATP; that stretch reads GGXGVGKT.

This sequence belongs to the ATPase alpha/beta chains family. In terms of assembly, F-type ATPases have 2 components, CF(1) - the catalytic core - and CF(0) - the membrane proton channel. CF(1) has five subunits: alpha(3), beta(3), gamma(1), delta(1), epsilon(1). CF(0) has four main subunits: a(1), b(1), b'(1) and c(9-12).

It is found in the plastid. The protein resides in the chloroplast thylakoid membrane. It catalyses the reaction ATP + H2O + 4 H(+)(in) = ADP + phosphate + 5 H(+)(out). In terms of biological role, produces ATP from ADP in the presence of a proton gradient across the membrane. The catalytic sites are hosted primarily by the beta subunits. In Ipomoea coccinea (Scarlet morning-glory), this protein is ATP synthase subunit beta, chloroplastic.